The sequence spans 156 residues: Small ribosomal subunit protein uS7 (156 aa).

This sequence belongs to the universal ribosomal protein uS7 family. As to quaternary structure, part of the 30S ribosomal subunit. Contacts proteins S9 and S11.

One of the primary rRNA binding proteins, it binds directly to 16S rRNA where it nucleates assembly of the head domain of the 30S subunit. Is located at the subunit interface close to the decoding center, probably blocks exit of the E-site tRNA. The polypeptide is Small ribosomal subunit protein uS7 (Thiobacillus denitrificans (strain ATCC 25259 / T1)).